The sequence spans 67 residues: Retron Se72 cold shock-like protein (67 aa).

The CSD domain occupies Met1 to Lys66.

Its function is as follows. Probable cold shock-like component of antiviral defense system retron Se72, composed of a non-coding RNA (ncRNA), a reverse transcriptase (RT) and this protein. Expression of retron Se72 confers protection against bacteriophage lambda. At multiplicity of infection (MOI) of 0.02 cultures slow growth when infected with lambda but do not collapse, at MOI 2 cultures enter growth stasis. The protein is Retron Se72 cold shock-like protein of Salmonella heidelberg (strain 579083-10).